The sequence spans 168 residues: Photosystem I assembly protein Ycf3 (168 aa).

TPR repeat units follow at residues 35–68 (AFTYYRDGMSAQSEGNYAEALQNYYEAMRPEIDP), 72–105 (SYILYNIGLIHTSNGEHTKALEYYFRALERNPFL), and 120–153 (GEEAIRQGDSEIAEAWFDQAAEYWKQAIALTPGN).

This sequence belongs to the Ycf3 family.

The protein resides in the plastid. It is found in the chloroplast thylakoid membrane. Its function is as follows. Essential for the assembly of the photosystem I (PSI) complex. May act as a chaperone-like factor to guide the assembly of the PSI subunits. The sequence is that of Photosystem I assembly protein Ycf3 from Nuphar advena (Common spatterdock).